Here is a 236-residue protein sequence, read N- to C-terminus: Ubiquinone biosynthesis O-methyltransferase (236 aa).

The S-adenosyl-L-methionine site is built by R39, G59, D80, and M124.

The protein belongs to the methyltransferase superfamily. UbiG/COQ3 family.

The enzyme catalyses a 3-demethylubiquinol + S-adenosyl-L-methionine = a ubiquinol + S-adenosyl-L-homocysteine + H(+). The catalysed reaction is a 3-(all-trans-polyprenyl)benzene-1,2-diol + S-adenosyl-L-methionine = a 2-methoxy-6-(all-trans-polyprenyl)phenol + S-adenosyl-L-homocysteine + H(+). The protein operates within cofactor biosynthesis; ubiquinone biosynthesis. O-methyltransferase that catalyzes the 2 O-methylation steps in the ubiquinone biosynthetic pathway. This is Ubiquinone biosynthesis O-methyltransferase from Shewanella sp. (strain MR-4).